Reading from the N-terminus, the 106-residue chain is ATP-dependent Clp protease adapter protein ClpS (106 aa).

This sequence belongs to the ClpS family. As to quaternary structure, binds to the N-terminal domain of the chaperone ClpA.

In terms of biological role, involved in the modulation of the specificity of the ClpAP-mediated ATP-dependent protein degradation. The protein is ATP-dependent Clp protease adapter protein ClpS of Yersinia pestis bv. Antiqua (strain Antiqua).